The sequence spans 1310 residues: Clustered mitochondria protein homolog (1310 aa).

In terms of domain architecture, Clu spans 375 to 619; the sequence is DITRSQESYL…RVTPLDVVWQ (245 aa). The span at 662–682 shows a compositional bias: basic and acidic residues; sequence KAQEDAANKEQPSETTESKEG. Disordered regions lie at residues 662-692 and 931-960; these read KAQE…EEAL and VANG…SRAV. TPR repeat units lie at residues 1033-1066, 1075-1108, and 1117-1150; these read AKLY…TERT, ILAY…WKII, and ITTM…CESL. Disordered stretches follow at residues 1245–1266 and 1281–1310; these read VQPQ…ANAS and GGDA…KSSA.

Belongs to the CLU family. May associate with the eukaryotic translation initiation factor 3 (eIF-3) complex.

It is found in the cytoplasm. MRNA-binding protein involved in proper cytoplasmic distribution of mitochondria. The chain is Clustered mitochondria protein homolog from Aspergillus fumigatus (strain CBS 144.89 / FGSC A1163 / CEA10) (Neosartorya fumigata).